A 548-amino-acid chain; its full sequence is Chaperonin GroEL (548 aa).

ATP contacts are provided by residues 30–33, lysine 51, 87–91, glycine 415, 479–481, and aspartate 495; these read TLGP, DGTTT, and NAA.

It belongs to the chaperonin (HSP60) family. As to quaternary structure, forms a cylinder of 14 subunits composed of two heptameric rings stacked back-to-back. Interacts with the co-chaperonin GroES.

It localises to the cytoplasm. It catalyses the reaction ATP + H2O + a folded polypeptide = ADP + phosphate + an unfolded polypeptide.. Together with its co-chaperonin GroES, plays an essential role in assisting protein folding. The GroEL-GroES system forms a nano-cage that allows encapsulation of the non-native substrate proteins and provides a physical environment optimized to promote and accelerate protein folding. This Pseudomonas fluorescens (strain Pf0-1) protein is Chaperonin GroEL.